A 399-amino-acid polypeptide reads, in one-letter code: Octopine dehydrogenase (399 aa).

Residues 10–13 (GGNG) and 35–38 (FADE) each bind NADH. Glutamine 118 and threonine 143 together coordinate pyruvate. Glutamine 118 serves as a coordination point for substrate. Cysteine 148 lines the NAD(+) pocket. Methionine 206 lines the L-arginine pocket. Position 212 (histidine 212) interacts with pyruvate. The active site involves histidine 212. Arginine 324 contacts NAD(+).

Belongs to the lysopine/nopaline/octopine/opine/vitopine dehydrogenases family.

It carries out the reaction D-octopine + NAD(+) + H2O = L-arginine + pyruvate + NADH + H(+). Its activity is regulated as follows. Agmatine acts as a competitive inhibitor of the condensation reaction where the L-arginine and agmatine substrates compete for the same site. In terms of biological role, catalyzes the reverse reaction of octopine dehydrogenation. Acts on L-arginine in preference to other substrates such as canavanine, cysteine, L-alanine, ornithine or norvaline, owing to the presence of the positively charged guanidium group. The chain is Octopine dehydrogenase from Pecten maximus (King scallop).